Here is a 566-residue protein sequence, read N- to C-terminus: Arginine--tRNA ligase (566 aa).

The 'HIGH' region signature appears at 123-133 (PNIAKPFHIGH).

This sequence belongs to the class-I aminoacyl-tRNA synthetase family. In terms of assembly, monomer.

Its subcellular location is the cytoplasm. It carries out the reaction tRNA(Arg) + L-arginine + ATP = L-arginyl-tRNA(Arg) + AMP + diphosphate. The chain is Arginine--tRNA ligase from Clostridioides difficile (strain 630) (Peptoclostridium difficile).